We begin with the raw amino-acid sequence, 283 residues long: Formamidopyrimidine-DNA glycosylase (283 aa).

The active-site Schiff-base intermediate with DNA is proline 2. Glutamate 3 serves as the catalytic Proton donor. Catalysis depends on lysine 58, which acts as the Proton donor; for beta-elimination activity. The DNA site is built by histidine 100, arginine 119, and arginine 162. The FPG-type zinc-finger motif lies at 247 to 283 (DVYGREGAPCKGEGCTGQIKRIVQSGRSSFYCAQCQR). Arginine 273 (proton donor; for delta-elimination activity) is an active-site residue.

It belongs to the FPG family. As to quaternary structure, monomer. Zn(2+) serves as cofactor.

It catalyses the reaction Hydrolysis of DNA containing ring-opened 7-methylguanine residues, releasing 2,6-diamino-4-hydroxy-5-(N-methyl)formamidopyrimidine.. It carries out the reaction 2'-deoxyribonucleotide-(2'-deoxyribose 5'-phosphate)-2'-deoxyribonucleotide-DNA = a 3'-end 2'-deoxyribonucleotide-(2,3-dehydro-2,3-deoxyribose 5'-phosphate)-DNA + a 5'-end 5'-phospho-2'-deoxyribonucleoside-DNA + H(+). In terms of biological role, involved in base excision repair of DNA damaged by oxidation or by mutagenic agents. Acts as a DNA glycosylase that recognizes and removes damaged bases. Has a preference for oxidized purines, such as 7,8-dihydro-8-oxoguanine (8-oxoG). Has AP (apurinic/apyrimidinic) lyase activity and introduces nicks in the DNA strand. Cleaves the DNA backbone by beta-delta elimination to generate a single-strand break at the site of the removed base with both 3'- and 5'-phosphates. This chain is Formamidopyrimidine-DNA glycosylase, found in Roseobacter denitrificans (strain ATCC 33942 / OCh 114) (Erythrobacter sp. (strain OCh 114)).